The following is an 88-amino-acid chain: Small ribosomal subunit protein bS20 (88 aa).

The tract at residues 1 to 22 (MANTPSAKKAVNKIAKRTQVNK) is disordered.

Belongs to the bacterial ribosomal protein bS20 family.

Functionally, binds directly to 16S ribosomal RNA. The chain is Small ribosomal subunit protein bS20 from Bartonella bacilliformis (strain ATCC 35685 / KC583 / Herrer 020/F12,63).